The following is a 158-amino-acid chain: RNA pyrophosphohydrolase (158 aa).

The 145-residue stretch at 8 to 152 (PYRPCAGVML…KRALYRGLIE (145 aa)) folds into the Nudix hydrolase domain. A Nudix box motif is present at residues 42–63 (GGIDEGEDAEKAAIRELGEETG).

The protein belongs to the Nudix hydrolase family. RppH subfamily. A divalent metal cation is required as a cofactor.

Functionally, accelerates the degradation of transcripts by removing pyrophosphate from the 5'-end of triphosphorylated RNA, leading to a more labile monophosphorylated state that can stimulate subsequent ribonuclease cleavage. The protein is RNA pyrophosphohydrolase of Sphingopyxis alaskensis (strain DSM 13593 / LMG 18877 / RB2256) (Sphingomonas alaskensis).